A 262-amino-acid chain; its full sequence is 4-hydroxy-2-oxovalerate aldolase (262 aa).

The active-site Proton acceptor is the H48. Q149 serves as a coordination point for substrate. E151 provides a ligand contact to Mg(2+). 2 residues coordinate substrate: A176 and D177. D177 is a Mg(2+) binding site.

Belongs to the HpcH/HpaI aldolase family.

It carries out the reaction (S)-4-hydroxy-2-oxopentanoate = acetaldehyde + pyruvate. It functions in the pathway xenobiotic degradation; biphenyl degradation. Its function is as follows. Catalyzes the reversible retro-aldol cleavage of 4-hydroxy-2-oxovalerate to pyruvate and acetaldehyde. This chain is 4-hydroxy-2-oxovalerate aldolase (bphF), found in Novosphingobium aromaticivorans (Sphingomonas aromaticivorans).